We begin with the raw amino-acid sequence, 359 residues long: Fructose-bisphosphate aldolase class 2 (359 aa).

Ser-50 is a D-glyceraldehyde 3-phosphate binding site. Residue Asp-83 is the Proton donor of the active site. Residues His-84, Asp-105, Glu-142, and His-198 each contribute to the Zn(2+) site. Position 199 (Gly-199) interacts with dihydroxyacetone phosphate. Residue His-232 coordinates Zn(2+). Residues 233-235 (GSS) and 275-278 (NIDT) each bind dihydroxyacetone phosphate.

Belongs to the class II fructose-bisphosphate aldolase family. Zn(2+) serves as cofactor.

It carries out the reaction beta-D-fructose 1,6-bisphosphate = D-glyceraldehyde 3-phosphate + dihydroxyacetone phosphate. The protein operates within carbohydrate degradation; glycolysis; D-glyceraldehyde 3-phosphate and glycerone phosphate from D-glucose: step 4/4. Its function is as follows. Catalyzes the aldol condensation of dihydroxyacetone phosphate (DHAP or glycerone-phosphate) with glyceraldehyde 3-phosphate (G3P) to form fructose 1,6-bisphosphate (FBP) in gluconeogenesis and the reverse reaction in glycolysis. The protein is Fructose-bisphosphate aldolase class 2 (fbaA) of Synechocystis sp. (strain ATCC 27184 / PCC 6803 / Kazusa).